The primary structure comprises 295 residues: Methionine aminopeptidase (295 aa).

Histidine 63 is a binding site for substrate. A divalent metal cation is bound by residues aspartate 83, aspartate 94, and histidine 154. Residue histidine 162 participates in substrate binding. The a divalent metal cation site is built by glutamate 188 and glutamate 281.

It belongs to the peptidase M24A family. Methionine aminopeptidase archaeal type 2 subfamily. In terms of assembly, monomer. The cofactor is Co(2+). Requires Zn(2+) as cofactor. Mn(2+) is required as a cofactor. Fe(2+) serves as cofactor.

It carries out the reaction Release of N-terminal amino acids, preferentially methionine, from peptides and arylamides.. Functionally, removes the N-terminal methionine from nascent proteins. The N-terminal methionine is often cleaved when the second residue in the primary sequence is small and uncharged (Met-Ala-, Cys, Gly, Pro, Ser, Thr, or Val). The polypeptide is Methionine aminopeptidase (Thermococcus kodakarensis (strain ATCC BAA-918 / JCM 12380 / KOD1) (Pyrococcus kodakaraensis (strain KOD1))).